Here is a 2241-residue protein sequence, read N- to C-terminus: Large tegument protein deneddylase (2241 aa).

The deubiquitination activity stretch occupies residues 1 to 238 (MKVTQASCHQ…IDLTGVVRES (238 aa)). The region spanning 4-226 (TQASCHQGDI…AARLVSTYRD (223 aa)) is the Peptidase C76 domain. Catalysis depends on residues cysteine 24, aspartate 160, and histidine 162. Residues 239–314 (ADTAATTTTA…STTSKTLATA (76 aa)) form a disordered region. Residues 240 to 250 (DTAATTTTAAP) are compositionally biased toward low complexity. A compositionally biased stretch (pro residues) spans 251–268 (SLPPLPDPIVDPGCPPGV). A compositionally biased stretch (low complexity) spans 304-314 (PSTTSKTLATA). The tract at residues 327–331 (SSAVP) is interaction with inner tegument protein. 2 disordered regions span residues 1187 to 1230 (MTET…PPAD) and 2118 to 2152 (PIARVQQPPRRHRHRAAAAADDDGQIDHAQDDTSR). Basic and acidic residues-rich tracts occupy residues 1190 to 1199 (TSERLDRSLR) and 2142 to 2152 (QIDHAQDDTSR).

The protein belongs to the herpesviridae large tegument protein family. Interacts with host CUL1 and CUL4A; these interactions inhibit the E3 ligase activity of cullins. Interacts with inner tegument protein. Interacts with capsid vertex specific component CVC2. Interacts with the major capsid protein/MCP.

Its subcellular location is the virion tegument. The protein resides in the host cytoplasm. It is found in the host nucleus. It carries out the reaction Thiol-dependent hydrolysis of ester, thioester, amide, peptide and isopeptide bonds formed by the C-terminal Gly of ubiquitin (a 76-residue protein attached to proteins as an intracellular targeting signal).. Functionally, large tegument protein that plays multiple roles in the viral cycle. During viral entry, remains associated with the capsid while most of the tegument is detached and participates in the capsid transport toward the host nucleus. Plays a role in the routing of the capsid at the nuclear pore complex and subsequent uncoating. Within the host nucleus, acts as a deneddylase and promotes the degradation of nuclear CRLs (cullin-RING ubiquitin ligases) and thereby stabilizes nuclear CRL substrates, while cytoplasmic CRLs remain unaffected. These modifications prevent host cell cycle S-phase progression and create a favorable environment allowing efficient viral genome replication. Participates later in the secondary envelopment of capsids. Indeed, plays a linker role for the association of the outer viral tegument to the capsids together with the inner tegument protein. This chain is Large tegument protein deneddylase (UL48), found in Homo sapiens (Human).